We begin with the raw amino-acid sequence, 258 residues long: Type III pantothenate kinase (258 aa).

9–16 (DIGNTSVN) is a binding site for ATP. 110 to 113 (GADR) contributes to the substrate binding site. Aspartate 112 functions as the Proton acceptor in the catalytic mechanism. Aspartate 132 serves as a coordination point for K(+). Threonine 135 serves as a coordination point for ATP. A substrate-binding site is contributed by threonine 187.

The protein belongs to the type III pantothenate kinase family. Homodimer. NH4(+) is required as a cofactor. K(+) serves as cofactor.

The protein localises to the cytoplasm. It carries out the reaction (R)-pantothenate + ATP = (R)-4'-phosphopantothenate + ADP + H(+). It participates in cofactor biosynthesis; coenzyme A biosynthesis; CoA from (R)-pantothenate: step 1/5. In terms of biological role, catalyzes the phosphorylation of pantothenate (Pan), the first step in CoA biosynthesis. This chain is Type III pantothenate kinase, found in Dehalococcoides mccartyi (strain ATCC BAA-2266 / KCTC 15142 / 195) (Dehalococcoides ethenogenes (strain 195)).